The chain runs to 234 residues: Thiamine import ATP-binding protein ThiQ (234 aa).

The ABC transporter domain maps to 2 to 230 (LRFSDVKYRY…EKPPELTQYL (229 aa)). 32–39 (GPSGAGKS) contributes to the ATP binding site.

It belongs to the ABC transporter superfamily. Thiamine importer (TC 3.A.1.19.1) family. The complex is composed of two ATP-binding proteins (ThiQ), two transmembrane proteins (ThiP) and a solute-binding protein (ThiB).

The protein resides in the cell inner membrane. It catalyses the reaction thiamine(out) + ATP + H2O = thiamine(in) + ADP + phosphate + H(+). In terms of biological role, part of the ABC transporter complex ThiBPQ involved in thiamine import. Responsible for energy coupling to the transport system. This chain is Thiamine import ATP-binding protein ThiQ, found in Aliivibrio fischeri (strain ATCC 700601 / ES114) (Vibrio fischeri).